Consider the following 221-residue polypeptide: Glutathione S-transferase Z1 (221 aa).

The GST N-terminal domain occupies E7 to P88. Glutathione contacts are provided by residues S17–S18, S17–R22, Q46, Q46–F47, T59–V60, V60, D72–S73, Q112, and N116–A118. Residues D93 to S218 form the GST C-terminal domain.

Belongs to the GST superfamily. Zeta family. As to quaternary structure, homodimer.

It is found in the cytoplasm. The protein resides in the cytosol. It carries out the reaction RX + glutathione = an S-substituted glutathione + a halide anion + H(+). In terms of biological role, acts a maleylacetone isomerase. Also catalyzes the glutathione-dependent dehalogenation of dichloroacetic acid to glyoxylic acid. In vitro, possesses glutathione peroxidase activity toward cumene hydroperoxide and linoleic acid-13-hydroperoxide. This chain is Glutathione S-transferase Z1 (GSTZ1), found in Arabidopsis thaliana (Mouse-ear cress).